Here is a 559-residue protein sequence, read N- to C-terminus: Pentatricopeptide repeat-containing protein At4g38010 (559 aa).

PPR repeat units follow at residues Ser-70 to Pro-104, Asp-105 to Asp-139, Asp-140 to Arg-170, Asp-171 to Glu-201, Asn-203 to Arg-233, Ser-238 to Lys-268, Asp-269 to Pro-304, Asp-305 to Trp-339, Asp-340 to Lys-370, Asn-371 to Pro-405, Asn-406 to Leu-440, and Lys-443 to Lys-473. The segment at Ile-478–Phe-554 is type E motif.

The protein belongs to the PPR family. PCMP-E subfamily.

The chain is Pentatricopeptide repeat-containing protein At4g38010 (PCMP-E45) from Arabidopsis thaliana (Mouse-ear cress).